A 241-amino-acid polypeptide reads, in one-letter code: MNNDQPLLKAQSPAGLAEEYIVRSIWNNHFPPGSDLPAERELAEKIGVTRTTLREVLQRLARDGWLNIQHGKPTKVNNIWETSGLNILEVLVRLDSTKLPSFISNILSARTNISAIYIQKAFKVEPQKSLEAFKDLDTLADTAEAYTNFDYDLFRKLAFASDNPVYGLILNSLKGLYTRVGLFYFANPSARELAKRFYLSLKTLCQTQQVNDVKECIRQYGKDSGVIWANMQAYLPANFNE.

The HTH gntR-type domain occupies 11–79 (QSPAGLAEEY…HGKPTKVNNI (69 aa)). Residues 39 to 58 (ERELAEKIGVTRTTLREVLQ) constitute a DNA-binding region (H-T-H motif).

As to quaternary structure, homodimer.

The protein localises to the cytoplasm. Multifunctional regulator of fatty acid metabolism. The chain is Fatty acid metabolism regulator protein from Pasteurella multocida (strain Pm70).